The primary structure comprises 83 residues: Large ribosomal subunit protein bL31B (83 aa).

This sequence belongs to the bacterial ribosomal protein bL31 family. Type B subfamily. As to quaternary structure, part of the 50S ribosomal subunit.

The protein is Large ribosomal subunit protein bL31B of Lactobacillus johnsonii (strain CNCM I-12250 / La1 / NCC 533).